Here is a 156-residue protein sequence, read N- to C-terminus: Ribosomal RNA large subunit methyltransferase H (156 aa).

S-adenosyl-L-methionine is bound by residues Leu73, Gly104, and 123 to 128 (LSPLTF).

This sequence belongs to the RNA methyltransferase RlmH family. As to quaternary structure, homodimer.

The protein resides in the cytoplasm. It catalyses the reaction pseudouridine(1915) in 23S rRNA + S-adenosyl-L-methionine = N(3)-methylpseudouridine(1915) in 23S rRNA + S-adenosyl-L-homocysteine + H(+). Functionally, specifically methylates the pseudouridine at position 1915 (m3Psi1915) in 23S rRNA. The polypeptide is Ribosomal RNA large subunit methyltransferase H (Thioalkalivibrio sulfidiphilus (strain HL-EbGR7)).